The primary structure comprises 277 residues: Release factor glutamine methyltransferase (277 aa).

S-adenosyl-L-methionine-binding positions include 117–121 (GTGTG), Asp140, Trp168, and Asn183. Residue 183 to 186 (NPPY) coordinates substrate.

The protein belongs to the protein N5-glutamine methyltransferase family. PrmC subfamily.

The catalysed reaction is L-glutaminyl-[peptide chain release factor] + S-adenosyl-L-methionine = N(5)-methyl-L-glutaminyl-[peptide chain release factor] + S-adenosyl-L-homocysteine + H(+). Functionally, methylates the class 1 translation termination release factors RF1/PrfA and RF2/PrfB on the glutamine residue of the universally conserved GGQ motif. This chain is Release factor glutamine methyltransferase, found in Shigella dysenteriae serotype 1 (strain Sd197).